A 124-amino-acid chain; its full sequence is UPF0102 protein HCH_05895 (124 aa).

Belongs to the UPF0102 family.

The protein is UPF0102 protein HCH_05895 of Hahella chejuensis (strain KCTC 2396).